We begin with the raw amino-acid sequence, 114 residues long: MIKALFNKNTALAAVTILALSGGAMAESAKTHKTDMAKKKVSELTCEDFNGLEESFKPTVVGWVVGFNKKGKEEDAVIDVDGIETVTPAIIEACKQEPKASFWKKAEAELKKVF.

The N-terminal stretch at 1 to 26 (MIKALFNKNTALAAVTILALSGGAMA) is a signal peptide. The cysteines at positions 46 and 94 are disulfide-linked.

It belongs to the HdeA family.

Its subcellular location is the periplasm. Its function is as follows. Required for optimal acid stress protection. Exhibits a chaperone-like activity only at low pH by suppressing non-specifically the aggregation of denaturated periplasmic proteins. In Brucella suis biovar 1 (strain 1330), this protein is Probable acid stress chaperone HdeA.